Consider the following 478-residue polypeptide: Proline--tRNA ligase (478 aa).

It belongs to the class-II aminoacyl-tRNA synthetase family. ProS type 3 subfamily. In terms of assembly, homodimer.

Its subcellular location is the cytoplasm. The catalysed reaction is tRNA(Pro) + L-proline + ATP = L-prolyl-tRNA(Pro) + AMP + diphosphate. Catalyzes the attachment of proline to tRNA(Pro) in a two-step reaction: proline is first activated by ATP to form Pro-AMP and then transferred to the acceptor end of tRNA(Pro). The polypeptide is Proline--tRNA ligase (Clostridium botulinum (strain Kyoto / Type A2)).